Reading from the N-terminus, the 706-residue chain is Glycogen [starch] synthase (706 aa).

Arg-26 lines the UDP pocket. 2 residues coordinate UDP-alpha-D-glucose: His-191 and Arg-197. Alpha-D-glucose 6-phosphate contacts are provided by His-277, Glu-278, Gln-280, His-283, and Lys-287. UDP is bound at residue Arg-317. Residue Arg-317 participates in UDP-alpha-D-glucose binding. An alpha-D-glucose 6-phosphate-binding site is contributed by His-491. UDP-alpha-D-glucose-binding residues include Glu-500, Trp-502, and Gly-503. Thr-505 contributes to the UDP binding site. Arg-572 and Arg-576 together coordinate alpha-D-glucose 6-phosphate. The segment at 670–706 is disordered; that stretch reads PEEEDPEEYPFPLTLKQRTGPGSPLDSIQGLQLNGTR.

Belongs to the glycosyltransferase 3 family. In terms of assembly, interacts with glucogenin gnn; the interaction is direct.

The enzyme catalyses [(1-&gt;4)-alpha-D-glucosyl](n) + UDP-alpha-D-glucose = [(1-&gt;4)-alpha-D-glucosyl](n+1) + UDP + H(+). Its pathway is glycan biosynthesis; glycogen biosynthesis. Allosteric activation by glucose-6-phosphate, and phosphorylation by a cAMP-dependent kinase. Its function is as follows. Glycogen synthase participates in the glycogen biosynthetic process along with glycogenin and glycogen branching enzyme. Extends the primer composed of a few glucose units formed by glycogenin by adding new glucose units to it. In this context, glycogen synthase transfers the glycosyl residue from UDP-Glc to the non-reducing end of alpha-1,4-glucan. This chain is Glycogen [starch] synthase (gsy-1), found in Neurospora crassa (strain ATCC 24698 / 74-OR23-1A / CBS 708.71 / DSM 1257 / FGSC 987).